A 199-amino-acid chain; its full sequence is Fe/S biogenesis protein NfuA (199 aa).

Cysteine 151 and cysteine 154 together coordinate [4Fe-4S] cluster.

The protein belongs to the NfuA family. As to quaternary structure, homodimer. [4Fe-4S] cluster is required as a cofactor.

Functionally, involved in iron-sulfur cluster biogenesis. Binds a 4Fe-4S cluster, can transfer this cluster to apoproteins, and thereby intervenes in the maturation of Fe/S proteins. Could also act as a scaffold/chaperone for damaged Fe/S proteins. The sequence is that of Fe/S biogenesis protein NfuA from Xylella fastidiosa (strain 9a5c).